A 429-amino-acid chain; its full sequence is MAFYRSWIGGGGDLVRRYTSSMADDVEIAEEVVKILKTHVAHLAEVGVIPREAAERIAKALDEVDYDALAKGGFEDIHEAVEKWVIDRVGEEAGGWLGLGRSRNDHVAAAIRLAALRKLAELKRGLAALRCALAKRALQYADCAMPSFTHFQPAQAITFGHYLLSIDELVEEFSRALAGVEPLLKRSPLGAGPAGGVKTPIDRRRLAKALGFEDVVGNALYASGSRFFASAAASIVVSFLVELSRYVDDFIRWNSPAIGYVKAPDSHVSTSSIMPHKRNLVTLEVLRARISEAVGHLTALYAVQAKIGAGYSLDLQEATRHLWAILKIAGEGVEVLRDFVEGLEFNCEKARLDAETYYATSSDTAEAIALSGVPFRRAYFQLAEEIKRGSAKLLSPEEAVKRPTEGSANPEEVRRAASARLIFCKTPAF.

Belongs to the lyase 1 family. Argininosuccinate lyase subfamily.

The protein localises to the cytoplasm. It catalyses the reaction 2-(N(omega)-L-arginino)succinate = fumarate + L-arginine. It participates in amino-acid biosynthesis; L-arginine biosynthesis; L-arginine from L-ornithine and carbamoyl phosphate: step 3/3. This Pyrobaculum calidifontis (strain DSM 21063 / JCM 11548 / VA1) protein is Argininosuccinate lyase.